We begin with the raw amino-acid sequence, 187 residues long: Lipoprotein signal peptidase (187 aa).

3 consecutive transmembrane segments (helical) span residues 12–32 (VAVFACIAIAAIAIDQLTKMW), 68–88 (MTWLISLLAMAACVALVVLAV), and 91–111 (ISMKWTVLFAFAFAGAFGNLI). Residues D127 and D140 contribute to the active site. The chain crosses the membrane as a helical span at residues 141–161 (IFLMLAGVAAVLLLFLGEPFS). Residues 167–187 (EANGKTLGDDANATDDGAKAA) are disordered.

This sequence belongs to the peptidase A8 family.

Its subcellular location is the cell membrane. The enzyme catalyses Release of signal peptides from bacterial membrane prolipoproteins. Hydrolyzes -Xaa-Yaa-Zaa-|-(S,diacylglyceryl)Cys-, in which Xaa is hydrophobic (preferably Leu), and Yaa (Ala or Ser) and Zaa (Gly or Ala) have small, neutral side chains.. It functions in the pathway protein modification; lipoprotein biosynthesis (signal peptide cleavage). Its function is as follows. This protein specifically catalyzes the removal of signal peptides from prolipoproteins. In Bifidobacterium adolescentis (strain ATCC 15703 / DSM 20083 / NCTC 11814 / E194a), this protein is Lipoprotein signal peptidase.